Here is a 155-residue protein sequence, read N- to C-terminus: Sec-independent protein translocase protein TatB (155 aa).

Residues 1–21 (MIDLGISKIALIGAVALIVIG) form a helical membrane-spanning segment. Disordered stretches follow at residues 81-103 (ASDF…LPGF) and 131-155 (SGIR…SRKA). Over residues 89–98 (SETTGSTSSD) the composition is skewed to polar residues.

Belongs to the TatB family. As to quaternary structure, the Tat system comprises two distinct complexes: a TatABC complex, containing multiple copies of TatA, TatB and TatC subunits, and a separate TatA complex, containing only TatA subunits. Substrates initially bind to the TatABC complex, which probably triggers association of the separate TatA complex to form the active translocon.

It localises to the cell inner membrane. Its function is as follows. Part of the twin-arginine translocation (Tat) system that transports large folded proteins containing a characteristic twin-arginine motif in their signal peptide across membranes. Together with TatC, TatB is part of a receptor directly interacting with Tat signal peptides. TatB may form an oligomeric binding site that transiently accommodates folded Tat precursor proteins before their translocation. This chain is Sec-independent protein translocase protein TatB, found in Polaromonas naphthalenivorans (strain CJ2).